We begin with the raw amino-acid sequence, 480 residues long: Serine carboxypeptidase-like 35 (480 aa).

A signal peptide spans 1-20 (MKKNALWLLCILVLPAIACG). N-linked (GlcNAc...) asparagine glycosylation is found at N79 and N146. 3 cysteine pairs are disulfide-bonded: C95–C363, C257–C270, and C294–C331. S188 is an active-site residue. A glycan (N-linked (GlcNAc...) asparagine) is linked at N265. N352 carries an N-linked (GlcNAc...) asparagine glycan. Catalysis depends on residues D399 and H452.

It belongs to the peptidase S10 family. In terms of tissue distribution, expressed in seedlings, flowers and siliques.

It is found in the secreted. Probable carboxypeptidase. In Arabidopsis thaliana (Mouse-ear cress), this protein is Serine carboxypeptidase-like 35 (SCPL35).